Reading from the N-terminus, the 186-residue chain is Threonylcarbamoyl-AMP synthase (186 aa).

The YrdC-like domain occupies 5-186; the sequence is TQSINDAVKC…DAITGEILRL (182 aa).

This sequence belongs to the SUA5 family. TsaC subfamily.

It localises to the cytoplasm. It catalyses the reaction L-threonine + hydrogencarbonate + ATP = L-threonylcarbamoyladenylate + diphosphate + H2O. In terms of biological role, required for the formation of a threonylcarbamoyl group on adenosine at position 37 (t(6)A37) in tRNAs that read codons beginning with adenine. Catalyzes the conversion of L-threonine, HCO(3)(-)/CO(2) and ATP to give threonylcarbamoyl-AMP (TC-AMP) as the acyladenylate intermediate, with the release of diphosphate. The protein is Threonylcarbamoyl-AMP synthase of Coxiella burnetii (strain RSA 493 / Nine Mile phase I).